A 90-amino-acid chain; its full sequence is Large ribosomal subunit protein bL27 (90 aa).

The interval 1-21 (MASKKAGGSTRNGRDSEAKRL) is disordered.

Belongs to the bacterial ribosomal protein bL27 family.

This Neisseria gonorrhoeae (strain ATCC 700825 / FA 1090) protein is Large ribosomal subunit protein bL27.